A 586-amino-acid chain; its full sequence is Proline--tRNA ligase (586 aa).

The protein belongs to the class-II aminoacyl-tRNA synthetase family. ProS type 1 subfamily. In terms of assembly, homodimer.

The protein localises to the cytoplasm. The catalysed reaction is tRNA(Pro) + L-proline + ATP = L-prolyl-tRNA(Pro) + AMP + diphosphate. In terms of biological role, catalyzes the attachment of proline to tRNA(Pro) in a two-step reaction: proline is first activated by ATP to form Pro-AMP and then transferred to the acceptor end of tRNA(Pro). As ProRS can inadvertently accommodate and process non-cognate amino acids such as alanine and cysteine, to avoid such errors it has two additional distinct editing activities against alanine. One activity is designated as 'pretransfer' editing and involves the tRNA(Pro)-independent hydrolysis of activated Ala-AMP. The other activity is designated 'posttransfer' editing and involves deacylation of mischarged Ala-tRNA(Pro). The misacylated Cys-tRNA(Pro) is not edited by ProRS. This Kineococcus radiotolerans (strain ATCC BAA-149 / DSM 14245 / SRS30216) protein is Proline--tRNA ligase.